The sequence spans 858 residues: Volume-regulated anion channel subunit LRRC8D (858 aa).

Over 1–22 the chain is Cytoplasmic; it reads MFTLAEVASLNDIQPTYRILKP. The chain crosses the membrane as a helical span at residues 23-48; that stretch reads WWDVFMDYLAVVMLMVAIFAGTMQLT. The Extracellular portion of the chain corresponds to 49–163; that stretch reads KDQVVCLPVL…YHLALPWYSK (115 aa). Cys-54 and Cys-354 are disulfide-bonded. A disordered region spans residues 118–137; that stretch reads AESTFPSQETKKEKRDPTGR. Basic and acidic residues predominate over residues 126–137; that stretch reads ETKKEKRDPTGR. A helical membrane pass occupies residues 164 to 182; the sequence is YFPYLALIHTIILMVSSNF. At 183-308 the chain is on the cytoplasmic side; sequence WFKYPKTCSK…EDSDLIYKLY (126 aa). Residues 221–251 form a disordered region; it reads SEENKQRITGAQTLPKHVSTSSDEGSPSAST. Over residues 227–251 the composition is skewed to polar residues; that stretch reads RITGAQTLPKHVSTSSDEGSPSAST. Ser-241, Ser-242, and Ser-246 each carry phosphoserine. The helical transmembrane segment at 309–330 threads the bilayer; that stretch reads VVQTLIKTAKFIFILCYTANFV. Over 331-360 the chain is Extracellular; the sequence is NAISFEHVCKPKVEHLTGYEVFECTHNMAY. The chain crosses the membrane as a helical span at residues 361–386; it reads MLKKLLISYISIICVYGFICLYTLFW. At 387–858 the chain is on the cytoplasmic side; that stretch reads LFRIPLKEYS…DVNVPFANGI (472 aa). 13 LRR repeats span residues 514-534, 538-559, 561-582, 589-609, 612-632, 636-657, 659-680, 684-705, 707-728, 730-751, 753-774, 776-797, and 799-820; these read NLQE…AFSF, HLRC…VYLL, NLRE…IGLE, HLKI…ITDV, HLTK…NSLK, NVAE…IFSL, NLQE…ISFQ, RLTC…ITHV, NLES…VFSL, KLRC…IGLL, NLQH…LFKC, KLRT…ISQL, and QLTQ…LGQC.

The protein belongs to the LRRC8 family. In terms of assembly, heterohexamer; oligomerizes with other LRRC8 proteins (LRRC8A, LRRC8B, LRRC8C and/or LRRC8E) to form a heterohexamer. In vivo, the subunit composition may depend primarily on expression levels, and heterooligomeric channels containing various proportions of the different LRRC8 proteins may coexist.

It is found in the cell membrane. It localises to the endoplasmic reticulum membrane. The enzyme catalyses chloride(in) = chloride(out). It catalyses the reaction iodide(out) = iodide(in). The catalysed reaction is taurine(out) = taurine(in). Non-essential component of the volume-regulated anion channel (VRAC, also named VSOAC channel), an anion channel required to maintain a constant cell volume in response to extracellular or intracellular osmotic changes. The VRAC channel conducts iodide better than chloride and can also conduct organic osmolytes like taurine. Plays a redundant role in the efflux of amino acids, such as aspartate, in response to osmotic stress. Channel activity requires LRRC8A plus at least one other family member (LRRC8B, LRRC8C, LRRC8D or LRRC8E); channel characteristics depend on the precise subunit composition. Also acts as a regulator of glucose-sensing in pancreatic beta cells: VRAC currents, generated in response to hypotonicity- or glucose-induced beta cell swelling, depolarize cells, thereby causing electrical excitation, leading to increase glucose sensitivity and insulin secretion. VRAC channels containing LRRC8D inhibit transport of immunoreactive cyclic dinucleotide GMP-AMP (2'-3'-cGAMP), an immune messenger produced in response to DNA virus in the cytosol. The polypeptide is Volume-regulated anion channel subunit LRRC8D (Rattus norvegicus (Rat)).